Consider the following 316-residue polypeptide: Transcription initiation factor IIB (316 aa).

A TFIIB-type zinc finger spans residues 11-42 (PRVTCPNHPDAILVEDYRAGDMICPECGLVVG). Positions 15, 18, 34, and 37 each coordinate Zn(2+). 3 positions are modified to phosphoserine: S70, S76, and S92. Tandem repeats lie at residues 124–200 (MADR…LILK) and 218–294 (FCSN…LIYP). 4 residues coordinate DNA: K152, R154, K189, and K196. The interval 189 to 193 (KEIGR) is core promoter DNA-binding. The residue at position 238 (K238) is an N6-acetyllysine; by autocatalysis. A necessary for TATA box-bound complex TBP formation region spans residues 244 to 316 (LVPGRSPISV…DTPVDKLPQL (73 aa)). R248 is a binding site for DNA. Residues 249–252 (SPIS) are core promoter DNA-binding. DNA is bound by residues K272, A281, T284, R286, and R290. The core promoter DNA-binding stretch occupies residues 283 to 286 (VTIR).

It belongs to the TFIIB family. Found in a ternary complex with TATA box-bound TBP. Part of a TFIID-containing RNA polymerase II pre-initiation complex (PIC) that is composed of TBP and at least GTF2A1, GTF2A2, GTF2E1, GTF2E2, GTF2F1, GTF2H2, GTF2H3, GTF2H4, GTF2H5, GTF2B, TCEA1, ERCC2, ERCC3, TAF1, TAF2, TAF3, TAF4, TAF5, TAF6, TAF7, TAF8, TAF9, TAF10, TAF11, TAF12 and TAF13. Associates with TFIID-TFIIA (DA complex) to form TFIID-TFIIA-TFIIB (DAB complex), which is then recognized by RNA polymerase II (Pol II). Found in a RNA polymerase II initiation complex. Interacts (via C-terminus) with TBP; this interaction with TATA box-bound TBP guides Pol II into the PIC. Interacts (via N-terminus) with Pol II. Interacts (via C-terminus) with SSU72; this interaction is inhibited by SYMPK. Interacts with NR2F1; this interaction is direct. Interacts with PGR. Interacts with ESR1. Interacts with GTF2F1 (via C-terminus and preferentially via acetylated form); this interaction prevents binding of GTF2B to GTF2F2. Interacts with GTF2F2 (via N-terminus); this interaction is inhibited in presence of GTF2F1. Interacts with the transcription elongation factor TCEA2. Interacts with HSF1 (via transactivation domain). Interacts with GPBP1. Acetylated. Autoacetylated; autoacetylation at Lys-238 stimulates transcription activation.

Its subcellular location is the nucleus. The protein localises to the chromosome. It catalyses the reaction L-lysyl-[protein] + acetyl-CoA = N(6)-acetyl-L-lysyl-[protein] + CoA + H(+). General transcription factor that plays a role in transcription initiation by RNA polymerase II (Pol II). Involved in the pre-initiation complex (PIC) formation and Pol II recruitment at promoter DNA. Together with the TATA box-bound TBP forms the core initiation complex and provides a bridge between TBP and the Pol II-TFIIF complex. Released from the PIC early following the onset of transcription during the initiation and elongation transition and reassociates with TBP during the next transcription cycle. Associates with chromatin to core promoter-specific regions. Binds to two distinct DNA core promoter consensus sequence elements in a TBP-independent manner; these IIB-recognition elements (BREs) are localized immediately upstream (BREu), 5'-[GC][GC][GA]CGCC-3', and downstream (BREd), 5'-[GA]T[TGA][TG][GT][TG][TG]-3', of the TATA box element. Modulates transcription start site selection. Also exhibits autoacetyltransferase activity that contributes to the activated transcription. The chain is Transcription initiation factor IIB from Pongo abelii (Sumatran orangutan).